A 283-amino-acid chain; its full sequence is Polyamine aminopropyltransferase (283 aa).

The 234-residue stretch at 3 to 236 (GIWFSELQTP…GLWAFSLGSK (234 aa)) folds into the PABS domain. Residue Gln-32 participates in S-methyl-5'-thioadenosine binding. Residues His-63 and Asp-87 each contribute to the spermidine site. S-methyl-5'-thioadenosine-binding positions include Glu-107 and 138-139 (DG). The active-site Proton acceptor is Asp-156. Position 156–159 (156–159 (DSTD)) interacts with spermidine. Pro-163 contributes to the S-methyl-5'-thioadenosine binding site.

It belongs to the spermidine/spermine synthase family. In terms of assembly, homodimer or homotetramer.

The protein resides in the cytoplasm. It catalyses the reaction S-adenosyl 3-(methylsulfanyl)propylamine + putrescine = S-methyl-5'-thioadenosine + spermidine + H(+). It functions in the pathway amine and polyamine biosynthesis; spermidine biosynthesis; spermidine from putrescine: step 1/1. Its function is as follows. Catalyzes the irreversible transfer of a propylamine group from the amino donor S-adenosylmethioninamine (decarboxy-AdoMet) to putrescine (1,4-diaminobutane) to yield spermidine. This is Polyamine aminopropyltransferase from Moorella thermoacetica (strain ATCC 39073 / JCM 9320).